We begin with the raw amino-acid sequence, 195 residues long: Cytochrome b-245 light chain (195 aa).

The Cytoplasmic segment spans residues 2–7 (GQIEWA). The chain crosses the membrane as a helical span at residues 8–30 (MWANEQALASGLILITGGIVATA). The Extracellular segment spans residues 31–35 (GRFTQ). Residues 36–53 (WYFGAYSIVAGVFVCLLE) traverse the membrane as a helical segment. Over 54-69 (YPRGKRKKGSTMERWG) the chain is Cytoplasmic. Residues 70–80 (QKYMTAVVKLF) lie within the membrane without spanning it. Residues 81–86 (GPFTRN) are Cytoplasmic-facing. Residues 87-104 (YYVRAVLHLLLSVPAGFL) traverse the membrane as a helical segment. Leu-105 is a topological domain (extracellular). A helical membrane pass occupies residues 106 to 126 (ATILGTACLAIASGIYLLAAV). The Cytoplasmic portion of the chain corresponds to 127–195 (RGEQWTPIEP…NPIPVTDEVV (69 aa)). The interval 134 to 195 (IEPKPRERPQ…NPIPVTDEVV (62 aa)) is disordered. Thr-147 is modified (phosphothreonine). Residue Lys-149 forms a Glycyl lysine isopeptide (Lys-Gly) (interchain with G-Cter in ubiquitin) linkage. Ser-168 is subject to Phosphoserine.

It belongs to the p22phox family. In terms of assembly, component of the phagocyte NADPH oxidase core complex/cytochrome b558 complex, composed of CYBB (heavy chain (beta)) and CYBA (light chain (alpha)). Component of the phagocyte NADPH oxidase complex composed of an obligatory core heterodimer formed by the membrane proteins CYBA and CYBB and the cytosolic regulatory subunits NCF1/p47-phox, NCF2/p67-phox, NCF4/p40-phox and the small GTPase RAC1 or RAC2. Interacts with NCF1 (via SH3 domain). Interacts with SH3PXD2A. Interacts with DUOX1, DUOX2 and TPO. Interacts with NOX4; this interaction mediates superoxide generation. Interacts with calprotectin (S100A8/9). Interacts with GBP7. Interacts with NOXO1. Forms a heterodimer with NOX3 and is essential for activity and cell membrane localization of NOX3. Interacts with NOX1. Phosphorylation at Thr-147 enhances NADPH oxidase activity by promoting NCF1/p47-phox binding. Post-translationally, ubiquitinated at Lys-149 likely by RNF145.

It is found in the cell membrane. In terms of biological role, subunit of NADPH oxidase complexes that is required for the NADPH oxidase activity that generates, in various cell types, superoxide from molecular oxygen utilizing NADPH as an electron donor. Subunit of the phagocyte NADPH oxidase complex that mediates the transfer of electrons from cytosolic NADPH to O2 to produce the superoxide anion (O2(-)). In the activated complex, electrons are first transferred from NADPH to flavin adenine dinucleotide (FAD) and subsequently transferred via two heme molecules to molecular oxygen, producing superoxide through an outer-sphere reaction. Activation of the NADPH oxidase complex is initiated by the assembly of cytosolic subunits of the NADPH oxidase complex with the core NADPH oxidase complex to form a complex at the plasma membrane or phagosomal membrane. This activation process is initiated by phosphorylation dependent binding of the cytosolic NCF1/p47-phox subunit to the C-terminus of CYBA/p22-phox. Aassociates with NOX3 to form a functional NADPH oxidase constitutively generating superoxide. The chain is Cytochrome b-245 light chain from Homo sapiens (Human).